The following is a 147-amino-acid chain: Phosphoribosyl-AMP cyclohydrolase (147 aa).

Asp-91 is a Mg(2+) binding site. Cys-92 contacts Zn(2+). Residues Asp-93 and Asp-95 each coordinate Mg(2+). Zn(2+)-binding residues include Cys-109 and Cys-116.

This sequence belongs to the PRA-CH family. Homodimer. The cofactor is Mg(2+). Zn(2+) serves as cofactor.

The protein localises to the cytoplasm. The enzyme catalyses 1-(5-phospho-beta-D-ribosyl)-5'-AMP + H2O = 1-(5-phospho-beta-D-ribosyl)-5-[(5-phospho-beta-D-ribosylamino)methylideneamino]imidazole-4-carboxamide. It functions in the pathway amino-acid biosynthesis; L-histidine biosynthesis; L-histidine from 5-phospho-alpha-D-ribose 1-diphosphate: step 3/9. Its function is as follows. Catalyzes the hydrolysis of the adenine ring of phosphoribosyl-AMP. In Rhodopseudomonas palustris (strain BisB18), this protein is Phosphoribosyl-AMP cyclohydrolase.